We begin with the raw amino-acid sequence, 278 residues long: 3-methyl-2-oxobutanoate hydroxymethyltransferase (278 aa).

Mg(2+) contacts are provided by aspartate 43 and aspartate 82. Residues aspartate 43 to serine 44, aspartate 82, and lysine 112 each bind 3-methyl-2-oxobutanoate. A Mg(2+)-binding site is contributed by glutamate 114. The Proton acceptor role is filled by glutamate 181.

Belongs to the PanB family. In terms of assembly, homodecamer; pentamer of dimers. Mg(2+) is required as a cofactor.

It localises to the cytoplasm. The catalysed reaction is 3-methyl-2-oxobutanoate + (6R)-5,10-methylene-5,6,7,8-tetrahydrofolate + H2O = 2-dehydropantoate + (6S)-5,6,7,8-tetrahydrofolate. The protein operates within cofactor biosynthesis; (R)-pantothenate biosynthesis; (R)-pantoate from 3-methyl-2-oxobutanoate: step 1/2. Its function is as follows. Catalyzes the reversible reaction in which hydroxymethyl group from 5,10-methylenetetrahydrofolate is transferred onto alpha-ketoisovalerate to form ketopantoate. The polypeptide is 3-methyl-2-oxobutanoate hydroxymethyltransferase (Bacillus cereus (strain G9842)).